We begin with the raw amino-acid sequence, 303 residues long: MTWQFPDRLSTNSALPGPAFSGQPAVDLSSFADFLRRQAPELLPAALGGAQSGPASSSGGTGQLPHGTTIVALKYPGGVVLAGDRRSTQGNMIAGRDVKKVYITDDYTATGIAGTAAIAVEFARLYAVELEHYEKLEGVPLTFAGKVNRLAIMVRGNLAAAMQGLVALPLLAGYDIDAPDPEGAGRIVSFDAAGGWNLEEEGYQSVGSGSIFAKSSMKKLYSQVVDADSAVRVAIEALYDAADDDSATGGPDLVRGIYPTAVTIGAEGALEVPESRIAELAREVIQSRSRADTFGPDAAGGDK.

The propeptide at 1 to 67 is removed in mature form; by autocatalysis; the sequence is MTWQFPDRLS…SGGTGQLPHG (67 aa). Residue T68 is the Nucleophile of the active site.

This sequence belongs to the peptidase T1B family. As to quaternary structure, the 20S proteasome core is composed of 14 alpha and 14 beta subunits that assemble into four stacked heptameric rings, resulting in a barrel-shaped structure. The two inner rings, each composed of seven catalytic beta subunits, are sandwiched by two outer rings, each composed of seven alpha subunits. The catalytic chamber with the active sites is on the inside of the barrel. Has a gated structure, the ends of the cylinder being occluded by the N-termini of the alpha-subunits. Is capped by the proteasome-associated ATPase, ARC.

It is found in the cytoplasm. It catalyses the reaction Cleavage of peptide bonds with very broad specificity.. It participates in protein degradation; proteasomal Pup-dependent pathway. Its activity is regulated as follows. The formation of the proteasomal ATPase ARC-20S proteasome complex, likely via the docking of the C-termini of ARC into the intersubunit pockets in the alpha-rings, may trigger opening of the gate for substrate entry. Interconversion between the open-gate and close-gate conformations leads to a dynamic regulation of the 20S proteasome proteolysis activity. In terms of biological role, component of the proteasome core, a large protease complex with broad specificity involved in protein degradation. This Mycolicibacterium paratuberculosis (strain ATCC BAA-968 / K-10) (Mycobacterium paratuberculosis) protein is Proteasome subunit beta.